Here is a 475-residue protein sequence, read N- to C-terminus: Squamosa promoter-binding-like protein 12 (475 aa).

A disordered region spans residues 49–73; that stretch reads NHGSTNSSGGTFTSSSELANGSSKS. A compositionally biased stretch (low complexity) spans 51–73; that stretch reads GSTNSSGGTFTSSSELANGSSKS. The SBP-type zinc-finger motif lies at 177-254; sequence SSYCQVEGCK…SDHNARRRKP (78 aa). 8 residues coordinate Zn(2+): Cys-180, Cys-185, Cys-202, His-205, Cys-221, Cys-224, His-228, and Cys-240. The short motif at 237 to 253 is the Bipartite nuclear localization signal element; that stretch reads KKSCRRRLSDHNARRRK. The disordered stretch occupies residues 437–475; that stretch reads GGGGFWQDGDDPPPLDHASQAQAFMHPGNGSSSGYGHLH. Polar residues predominate over residues 465–475; that stretch reads NGSSSGYGHLH.

In terms of tissue distribution, expressed in young panicles.

It is found in the nucleus. In terms of biological role, trans-acting factor that binds specifically to the consensus nucleotide sequence 5'-TNCGTACAA-3'. May be involved in panicle development. In Oryza sativa subsp. indica (Rice), this protein is Squamosa promoter-binding-like protein 12 (SPL12).